We begin with the raw amino-acid sequence, 421 residues long: D-amino acid dehydrogenase (421 aa).

3–17 provides a ligand contact to FAD; sequence VLVLGGGVVGVTSAY.

It belongs to the DadA oxidoreductase family. Requires FAD as cofactor.

The catalysed reaction is a D-alpha-amino acid + A + H2O = a 2-oxocarboxylate + AH2 + NH4(+). The protein operates within amino-acid degradation; D-alanine degradation; NH(3) and pyruvate from D-alanine: step 1/1. Its function is as follows. Oxidative deamination of D-amino acids. This is D-amino acid dehydrogenase from Methylobacterium sp. (strain 4-46).